The chain runs to 364 residues: Methylthioribose-1-phosphate isomerase (364 aa).

Residues 53–55 (RGA), arginine 90, and glutamine 200 contribute to the substrate site. The active-site Proton donor is aspartate 241. 251–252 (NK) contributes to the substrate binding site.

Belongs to the eIF-2B alpha/beta/delta subunits family. MtnA subfamily.

The catalysed reaction is 5-(methylsulfanyl)-alpha-D-ribose 1-phosphate = 5-(methylsulfanyl)-D-ribulose 1-phosphate. The protein operates within amino-acid biosynthesis; L-methionine biosynthesis via salvage pathway; L-methionine from S-methyl-5-thio-alpha-D-ribose 1-phosphate: step 1/6. Its function is as follows. Catalyzes the interconversion of methylthioribose-1-phosphate (MTR-1-P) into methylthioribulose-1-phosphate (MTRu-1-P). The chain is Methylthioribose-1-phosphate isomerase from Methylobacterium nodulans (strain LMG 21967 / CNCM I-2342 / ORS 2060).